Consider the following 342-residue polypeptide: N-acetyl-gamma-glutamyl-phosphate reductase (342 aa).

The active site involves Cys147.

It belongs to the NAGSA dehydrogenase family. Type 1 subfamily.

Its subcellular location is the cytoplasm. It catalyses the reaction N-acetyl-L-glutamate 5-semialdehyde + phosphate + NADP(+) = N-acetyl-L-glutamyl 5-phosphate + NADPH + H(+). The protein operates within amino-acid biosynthesis; L-arginine biosynthesis; N(2)-acetyl-L-ornithine from L-glutamate: step 3/4. Functionally, catalyzes the NADPH-dependent reduction of N-acetyl-5-glutamyl phosphate to yield N-acetyl-L-glutamate 5-semialdehyde. The chain is N-acetyl-gamma-glutamyl-phosphate reductase from Campylobacter jejuni subsp. jejuni serotype O:2 (strain ATCC 700819 / NCTC 11168).